A 746-amino-acid polypeptide reads, in one-letter code: Protein C-mannosyl-transferase DPY19L1 (746 aa).

The disordered stretch occupies residues 1 to 68 (MVLQARSKHR…RAETAAPAPD (68 aa)). Residues 14–27 (PRPPRPARSSPPPL) show a composition bias toward pro residues. 12 helical membrane-spanning segments follow: residues 93–113 (STLL…TQLF), 139–159 (YSYF…WMIM), 227–247 (ACFY…LFFI), 248–268 (YGTY…CFFF), 308–328 (YRGS…PWQF), 329–349 (AQFV…VGYI), 357–377 (IIYT…GNSM), 378–398 (LLTS…AMKP), 405–425 (VSEL…TVTL), 481–501 (LLLP…INDM), 520–540 (GELV…ILIM), and 562–582 (LFGW…VLAA).

Belongs to the dpy-19 family.

It is found in the endoplasmic reticulum membrane. The enzyme catalyses L-tryptophyl-[protein] + a di-trans,poly-cis-dolichyl beta-D-mannosyl phosphate = C-alpha-D-mannosyl-L-tryptophyl-[protein] + a di-trans,poly-cis-dolichyl phosphate + H(+). It functions in the pathway protein modification; protein glycosylation. C-mannosyltransferase that mediates the C-mannosylation tryptophan residues on target proteins. The reaction occurs on the luminal side of the endoplasmic reticulum and involves the transfer of a mannose unit from a dolichylphosphate mannose (Dol-P-Man) donor to an acceptor protein containing a WxxW consensus sequence. C-mannosylates the first two tryptophans in the WxxWxxWxxC sequence motif in thrombospondin (TSP) type-1 repeats of UNC5A. Regulates neurite extension during development. This is Protein C-mannosyl-transferase DPY19L1 (Dpy19l1) from Rattus norvegicus (Rat).